The chain runs to 617 residues: Chaperone protein HscA homolog (617 aa).

The protein belongs to the heat shock protein 70 family.

Functionally, chaperone involved in the maturation of iron-sulfur cluster-containing proteins. Has a low intrinsic ATPase activity which is markedly stimulated by HscB. The sequence is that of Chaperone protein HscA homolog from Aliivibrio salmonicida (strain LFI1238) (Vibrio salmonicida (strain LFI1238)).